Here is a 571-residue protein sequence, read N- to C-terminus: FAD-linked oxidoreductase patO (571 aa).

Positions 1 to 23 (MRLHQSPPRLLVCILSVLQVSAG) are cleaved as a signal peptide. Asn47, Asn101, Asn125, Asn179, Asn341, Asn374, Asn380, Asn421, Asn445, and Asn480 each carry an N-linked (GlcNAc...) asparagine glycan. Residues 115–294 (TLGAMVRYAV…YAVTVKTFPD (180 aa)) enclose the FAD-binding PCMH-type domain.

It belongs to the oxygen-dependent FAD-linked oxidoreductase family. Requires FAD as cofactor.

Its subcellular location is the vacuole lumen. It functions in the pathway mycotoxin biosynthesis; patulin biosynthesis. FAD-linked oxidoreductase; part of the gene cluster that mediates the biosynthesis of patulin, an acetate-derived tetraketide mycotoxin produced by several fungal species that shows antimicrobial properties against several bacteria. PatO acts with patJ in the vacuole to convert gentisyl alcohol to isoepoxydon. The pathway begins with the synthesis of 6-methylsalicylic acid by the polyketide synthase (PKS) patK via condensation of acetate and malonate units. The 6-methylsalicylic acid decarboxylase patG then catalyzes the decarboxylation of 6-methylsalicylic acid to yield m-cresol (also known as 3-methylphenol). These first reactions occur in the cytosol. The intermediate m-cresol is then transported into the endoplasmic reticulum where the cytochrome P450 monooxygenase patH converts it to m-hydroxybenzyl alcohol, which is further converted to gentisyl alcohol by the cytochrome P450 monooxygenase patI. The oxidoreductases patJ and patO further convert gentisyl alcohol to isoepoxydon in the vacuole. PatN catalyzes then the transformation of isoepoxydon into phyllostine. The cluster protein patF is responsible for the conversion from phyllostine to neopatulin whereas the alcohol dehydrogenase patD converts neopatulin to E-ascladiol. The steps between isoepoxydon and E-ascladiol occur in the cytosol, and E-ascladiol is probably secreted to the extracellular space by one of the cluster-specific transporters patC or patM. Finally, the secreted patulin synthase patE catalyzes the conversion of E-ascladiol to patulin. This is FAD-linked oxidoreductase patO from Penicillium expansum (Blue mold rot fungus).